Reading from the N-terminus, the 201-residue chain is Pyridoxal 5'-phosphate synthase subunit PdxT (201 aa).

49–51 (GES) is a binding site for L-glutamine. The active-site Nucleophile is the C81. Residues R110 and 139 to 140 (IR) contribute to the L-glutamine site. Catalysis depends on charge relay system residues H180 and E182.

The protein belongs to the glutaminase PdxT/SNO family. As to quaternary structure, in the presence of PdxS, forms a dodecamer of heterodimers. Only shows activity in the heterodimer.

The catalysed reaction is aldehydo-D-ribose 5-phosphate + D-glyceraldehyde 3-phosphate + L-glutamine = pyridoxal 5'-phosphate + L-glutamate + phosphate + 3 H2O + H(+). It catalyses the reaction L-glutamine + H2O = L-glutamate + NH4(+). Its pathway is cofactor biosynthesis; pyridoxal 5'-phosphate biosynthesis. Catalyzes the hydrolysis of glutamine to glutamate and ammonia as part of the biosynthesis of pyridoxal 5'-phosphate. The resulting ammonia molecule is channeled to the active site of PdxS. In Salinispora arenicola (strain CNS-205), this protein is Pyridoxal 5'-phosphate synthase subunit PdxT.